Reading from the N-terminus, the 403-residue chain is S-adenosylmethionine synthase (403 aa).

His16 provides a ligand contact to ATP. Asp18 contributes to the Mg(2+) binding site. Residue Glu44 coordinates K(+). L-methionine contacts are provided by Glu57 and Gln100. Residues 100-110 are flexible loop; the sequence is QSPDIAQGVDR. The tract at residues 106–126 is disordered; sequence QGVDRSYESRSGSASTDAHDL. Residues 176 to 178, 248 to 249, Asp257, 263 to 264, Ala280, and Lys284 each bind ATP; these read DGK, KF, and RK. Asp257 provides a ligand contact to L-methionine. Lys288 contributes to the L-methionine binding site.

This sequence belongs to the AdoMet synthase family. Homotetramer; dimer of dimers. Mg(2+) serves as cofactor. The cofactor is K(+).

The protein localises to the cytoplasm. It carries out the reaction L-methionine + ATP + H2O = S-adenosyl-L-methionine + phosphate + diphosphate. It functions in the pathway amino-acid biosynthesis; S-adenosyl-L-methionine biosynthesis; S-adenosyl-L-methionine from L-methionine: step 1/1. Its function is as follows. Catalyzes the formation of S-adenosylmethionine (AdoMet) from methionine and ATP. The overall synthetic reaction is composed of two sequential steps, AdoMet formation and the subsequent tripolyphosphate hydrolysis which occurs prior to release of AdoMet from the enzyme. The chain is S-adenosylmethionine synthase from Clavibacter michiganensis subsp. michiganensis (strain NCPPB 382).